The sequence spans 159 residues: E3 ubiquitin ligase complex SCF subunit sconC (159 aa).

The interval isoleucine 101 to glutamate 159 is interaction with the F-box domain of F-box proteins.

Belongs to the SKP1 family. In terms of assembly, component of the SCF (SKP1-CUL1-F-box protein) E3 ubiquitin ligase complexes.

It participates in protein modification; protein ubiquitination. In terms of biological role, essential component of the SCF (SKP1-CUL1-F-box protein) E3 ubiquitin ligase complexes, which mediate the ubiquitination and subsequent proteasomal degradation of target proteins. Controls sulfur metabolite repression, probably by mediating the inactivation or degradation of the metR transcription factor. This Aspergillus clavatus (strain ATCC 1007 / CBS 513.65 / DSM 816 / NCTC 3887 / NRRL 1 / QM 1276 / 107) protein is E3 ubiquitin ligase complex SCF subunit sconC (sconC).